A 178-amino-acid chain; its full sequence is Large ribosomal subunit protein uL5 (178 aa).

Alanine 2 is subject to N-acetylalanine. A Glycyl lysine isopeptide (Lys-Gly) (interchain with G-Cter in SUMO2) cross-link involves residue lysine 38. A phosphothreonine mark is found at threonine 44 and threonine 47. Residue lysine 52 is modified to N6-acetyllysine; alternate. Lysine 52 participates in a covalent cross-link: Glycyl lysine isopeptide (Lys-Gly) (interchain with G-Cter in SUMO2); alternate. At lysine 85 the chain carries N6-acetyllysine. Lysine 154 is covalently cross-linked (Glycyl lysine isopeptide (Lys-Gly) (interchain with G-Cter in SUMO2)).

This sequence belongs to the universal ribosomal protein uL5 family. Component of the large ribosomal subunit (LSU). Part of the 5S RNP complex, which is a LSU subcomplex composed of the 5S RNA, RPL5 and RPL11. Component of a hexameric 5S RNP precursor complex, composed of 5S RNA, RRS1, RPF2/BXDC1, RPL5, RPL11 and HEATR3; this complex acts as a precursor for ribosome assembly. Interacts with PML. Interacts with MDM2 (via its RanBP2-type zinc finger domain); negatively regulates MDM2-mediated TP53 ubiquitination and degradation. Interacts with NOP53; retains RPL11 into the nucleolus.

Its subcellular location is the nucleus. It localises to the nucleolus. The protein resides in the cytoplasm. Component of the ribosome, a large ribonucleoprotein complex responsible for the synthesis of proteins in the cell. The small ribosomal subunit (SSU) binds messenger RNAs (mRNAs) and translates the encoded message by selecting cognate aminoacyl-transfer RNA (tRNA) molecules. The large subunit (LSU) contains the ribosomal catalytic site termed the peptidyl transferase center (PTC), which catalyzes the formation of peptide bonds, thereby polymerizing the amino acids delivered by tRNAs into a polypeptide chain. The nascent polypeptides leave the ribosome through a tunnel in the LSU and interact with protein factors that function in enzymatic processing, targeting, and the membrane insertion of nascent chains at the exit of the ribosomal tunnel. As part of the 5S RNP/5S ribonucleoprotein particle it is an essential component of the LSU, required for its formation and the maturation of rRNAs. It also couples ribosome biogenesis to p53/TP53 activation. As part of the 5S RNP it accumulates in the nucleoplasm and inhibits MDM2, when ribosome biogenesis is perturbed, mediating the stabilization and the activation of TP53. Promotes nucleolar location of PML. The sequence is that of Large ribosomal subunit protein uL5 (RPL11) from Oryctolagus cuniculus (Rabbit).